Reading from the N-terminus, the 23-residue chain is Ocellatin-LB2 (23 aa).

The residue at position 23 (asparagine 23) is an Asparagine amide.

Expressed by the skin glands.

The protein localises to the secreted. In terms of biological role, antibacterial peptide that inhibits the Gram-negative bacterium A.actinomycetemcomitans ATCC 29522 (MIC=210 uM). No activity against the bacteria E.coli ATCC 25922 and S.aureus ATCC 25923, or the fungi C.albicans ATCC 18804 and C.lusitaniae ATCC 56936. Does not show hemolytic activity towards rabbit erythrocytes. This is Ocellatin-LB2 from Leptodactylus labyrinthicus (Labyrinth frog).